Consider the following 88-residue polypeptide: uncharacterized protein (88 aa).

A disordered region spans residues M1–T31.

This is an uncharacterized protein from Escherichia coli.